Here is a 153-residue protein sequence, read N- to C-terminus: Virion assembly protein OPG100 (153 aa).

It belongs to the orthopoxvirus OPG100 family. In terms of assembly, homodimer. Part of a complex composed of the kinase OPG054, OPG092, OPG114, OPG115, OPG142 and OPG157. Interacts with OPG175.

Its subcellular location is the virion. It is found in the host cytoplasm. Its function is as follows. Late protein which is a part of a large complex required for early virion morphogenesis. This complex participates in the formation of virosomes and the incorporation of virosomal contents into nascent immature virions. Plays a role in DNA packaging during immature virions (IV) formation. The polypeptide is Virion assembly protein OPG100 (OPG100) (Vaccinia virus (strain Copenhagen) (VACV)).